A 212-amino-acid chain; its full sequence is Protein-L-isoaspartate O-methyltransferase (212 aa).

Residue serine 60 is part of the active site.

Belongs to the methyltransferase superfamily. L-isoaspartyl/D-aspartyl protein methyltransferase family.

The protein localises to the cytoplasm. The catalysed reaction is [protein]-L-isoaspartate + S-adenosyl-L-methionine = [protein]-L-isoaspartate alpha-methyl ester + S-adenosyl-L-homocysteine. In terms of biological role, catalyzes the methyl esterification of L-isoaspartyl residues in peptides and proteins that result from spontaneous decomposition of normal L-aspartyl and L-asparaginyl residues. It plays a role in the repair and/or degradation of damaged proteins. This Pseudomonas putida (strain ATCC 700007 / DSM 6899 / JCM 31910 / BCRC 17059 / LMG 24140 / F1) protein is Protein-L-isoaspartate O-methyltransferase.